The sequence spans 102 residues: Large ribosomal subunit protein uL24 (102 aa).

It belongs to the universal ribosomal protein uL24 family. In terms of assembly, part of the 50S ribosomal subunit.

Its function is as follows. One of two assembly initiator proteins, it binds directly to the 5'-end of the 23S rRNA, where it nucleates assembly of the 50S subunit. In terms of biological role, one of the proteins that surrounds the polypeptide exit tunnel on the outside of the subunit. This chain is Large ribosomal subunit protein uL24, found in Rhizobium johnstonii (strain DSM 114642 / LMG 32736 / 3841) (Rhizobium leguminosarum bv. viciae).